A 138-amino-acid polypeptide reads, in one-letter code: Ribulose bisphosphate carboxylase small subunit (138 aa).

It belongs to the RuBisCO small chain family. Heterohexadecamer of 8 large and 8 small subunits.

It is found in the plastid. The protein localises to the chloroplast. RuBisCO catalyzes two reactions: the carboxylation of D-ribulose 1,5-bisphosphate, the primary event in carbon dioxide fixation, as well as the oxidative fragmentation of the pentose substrate in the photorespiration process. Both reactions occur simultaneously and in competition at the same active site. Although the small subunit is not catalytic it is essential for maximal activity. This is Ribulose bisphosphate carboxylase small subunit from Porphyra purpurea (Red seaweed).